The chain runs to 135 residues: Large ribosomal subunit protein uL16c (135 aa).

Belongs to the universal ribosomal protein uL16 family. In terms of assembly, part of the 50S ribosomal subunit.

It localises to the plastid. The protein resides in the chloroplast. The protein is Large ribosomal subunit protein uL16c of Daucus carota (Wild carrot).